The sequence spans 506 residues: Exopolyphosphatase (506 aa).

The protein belongs to the GppA/Ppx family. In terms of assembly, homodimer. The cofactor is Mg(2+).

It is found in the cell membrane. The enzyme catalyses [phosphate](n) + H2O = [phosphate](n-1) + phosphate + H(+). It carries out the reaction [phosphate](n) + ATP = [phosphate](n+1) + ADP. Its activity is regulated as follows. Exopolyphosphatase activity is stimulated by NH(4)(+) and K(+). Phosphotransferase activity is insensitive to the addition of K(+) or NH(4)(+) ions. Degradation of inorganic polyphosphates (polyP). Releases orthophosphate processively from the ends of the polyP chain. Also has polyphosphate:ADP phosphotransferase activity, catalyzing the production of ATP from ADP and polyP. This Pseudomonas aeruginosa (strain ATCC 15692 / DSM 22644 / CIP 104116 / JCM 14847 / LMG 12228 / 1C / PRS 101 / PAO1) protein is Exopolyphosphatase.